We begin with the raw amino-acid sequence, 115 residues long: Cell division protein FtsL (115 aa).

The Cytoplasmic segment spans residues 1-25; the sequence is MNTATRVIVAQNVRTRNRTFQITKQ. The chain crosses the membrane as a helical span at residues 26–46; it reads GVVIVALVIALLCSAFGVVYF. Over 47–115 the chain is Periplasmic; sequence KDLNRRLFIQ…ILVNADAMIE (69 aa).

Belongs to the FtsL family. As to quaternary structure, part of a complex composed of FtsB, FtsL and FtsQ.

It localises to the cell inner membrane. Essential cell division protein. May link together the upstream cell division proteins, which are predominantly cytoplasmic, with the downstream cell division proteins, which are predominantly periplasmic. The protein is Cell division protein FtsL of Coxiella burnetii (strain RSA 493 / Nine Mile phase I).